We begin with the raw amino-acid sequence, 308 residues long: Rhamnose-binding lectin (308 aa).

An N-terminal signal peptide occupies residues 1–23 (MMLILKLSLLSLLIATPGLLVSG). SUEL-type lectin domains are found at residues 27-115 (ITCY…SFDC), 123-213 (ICEH…YICT), and 218-308 (VCEG…YACV). Asparagine 110 carries N-linked (GlcNAc...) asparagine glycosylation.

As to quaternary structure, homotrimer. In terms of tissue distribution, expressed in eggs, but not in liver.

The protein resides in the secreted. Its function is as follows. Lectin that binds L-rhamnose. Also binds monosaccharides possessing steric similarity to the hydroxyl group orientation at C2 and C4 of the pyranose ring structure of L-rhamnose, such as L-mannose and L-lyxose. The polypeptide is Rhamnose-binding lectin (Silurus asotus (Amur catfish)).